The primary structure comprises 1161 residues: DNA-directed RNA polymerase subunit beta (1161 aa).

Belongs to the RNA polymerase beta chain family. As to quaternary structure, the RNAP catalytic core consists of 2 alpha, 1 beta, 1 beta' and 1 omega subunit. When a sigma factor is associated with the core the holoenzyme is formed, which can initiate transcription. The RNAP complex including the principal sigma factor HrdB also interacts with RNA-binding protein RbpA.

It catalyses the reaction RNA(n) + a ribonucleoside 5'-triphosphate = RNA(n+1) + diphosphate. DNA-dependent RNA polymerase catalyzes the transcription of DNA into RNA using the four ribonucleoside triphosphates as substrates. The polypeptide is DNA-directed RNA polymerase subunit beta (Streptomyces coelicolor (strain ATCC BAA-471 / A3(2) / M145)).